The primary structure comprises 236 residues: Lipoarabinomannan carrier protein LprG (236 aa).

The N-terminal stretch at 1 to 25 (MQTRPRFAVQSLFAILATAAALVAG) is a signal peptide. A lipid anchor (N-palmitoyl cysteine) is attached at cysteine 26. The S-diacylglycerol cysteine moiety is linked to residue cysteine 26.

It belongs to the LppX/LprAFG lipoprotein family. In terms of assembly, interacts with itself, Ag85A (MSMEG_6398), LppI (MSMEG_3851) and LppK (MSMEG_3904) in vivo.

It localises to the cell inner membrane. The protein resides in the secreted. It is found in the cell wall. Its function is as follows. Helps membrane protein MSMEG_3069/MSMEI_2992 (P55) transport triacylglycerides (TAG) across the inner cell membrane into the periplasm and probably ultimately to the outer membrane. Binds TAG in its hydrophobic cavity and transfers it between lipid bilayers. TAG probably regulates lipid metabolism and growth regulation and plays a structural role in the outer membrane. Also binds mannosides, lipoarabinomannan and lipomannan and various glycolipids in the same cavity. Required for MSMEG_3069/MSMEI_2992 export activity. Export of ethidium bromide by MSMEG_3069/MSMEI_2992 can be complemented by the equivalent operon from M.tuberculosis (lprG-Rv1410c). Involved in mycolylation. The polypeptide is Lipoarabinomannan carrier protein LprG (Mycolicibacterium smegmatis (strain ATCC 700084 / mc(2)155) (Mycobacterium smegmatis)).